The primary structure comprises 244 residues: tRNA pseudouridine synthase A (244 aa).

Asp-52 serves as the catalytic Nucleophile. Position 110 (Tyr-110) interacts with substrate.

The protein belongs to the tRNA pseudouridine synthase TruA family. In terms of assembly, homodimer.

It catalyses the reaction uridine(38/39/40) in tRNA = pseudouridine(38/39/40) in tRNA. Functionally, formation of pseudouridine at positions 38, 39 and 40 in the anticodon stem and loop of transfer RNAs. This is tRNA pseudouridine synthase A from Acetivibrio thermocellus (strain ATCC 27405 / DSM 1237 / JCM 9322 / NBRC 103400 / NCIMB 10682 / NRRL B-4536 / VPI 7372) (Clostridium thermocellum).